Consider the following 291-residue polypeptide: RPE-retinal G protein-coupled receptor (291 aa).

The Extracellular portion of the chain corresponds to Met1–Glu15. A helical membrane pass occupies residues Val16–Leu36. Topologically, residues Thr37–His52 are cytoplasmic. Residues Leu53–Ala73 traverse the membrane as a helical segment. Topologically, residues Thr74–His91 are extracellular. Cys88 and Cys162 form a disulfide bridge. Residues Gly92–Gly112 traverse the membrane as a helical segment. Topologically, residues Arg113–Ser130 are cytoplasmic. A helical transmembrane segment spans residues Leu131 to Gly151. Topologically, residues His152 to Ser175 are extracellular. N-linked (GlcNAc...) asparagine glycosylation occurs at Asn172. A helical transmembrane segment spans residues Phe176–Tyr196. Topologically, residues Arg197–Thr219 are cytoplasmic. Residues Leu220 to Thr240 form a helical membrane-spanning segment. The Extracellular segment spans residues Ser241 to Gln247. The helical transmembrane segment at Met248–Gly268 threads the bilayer. N6-(retinylidene)lysine is present on Lys255. Residues Ser269 to Gln291 lie on the Cytoplasmic side of the membrane.

The protein belongs to the G-protein coupled receptor 1 family. Opsin subfamily. Covalently binds all-trans- and 11-cis-retinal. In terms of tissue distribution, preferentially expressed at high levels in the retinal pigment epithelium (RPE) and Mueller cells of the neural retina.

Its subcellular location is the membrane. Its function is as follows. Receptor for all-trans- and 11-cis-retinal. Binds preferentially to the former and may catalyze the isomerization of the chromophore by a retinochrome-like mechanism. The chain is RPE-retinal G protein-coupled receptor (RGR) from Bos taurus (Bovine).